Here is a 422-residue protein sequence, read N- to C-terminus: Carboxypeptidase B2 (422 aa).

The signal sequence occupies residues 1 to 21 (MKLYGLGVLVAIILYEKHGLA). Positions 22 to 113 (FQSGHVLSAL…QTSNDTVSPR (92 aa)) are cleaved as a propeptide — activation peptide. N-linked (GlcNAc...) asparagine glycans are attached at residues Asn-43, Asn-72, Asn-84, and Asn-107. Residues 121–418 (QYHSLNEIYS…AAVSKIAWHV (298 aa)) enclose the Peptidase M14 domain. Cys-177 and Cys-190 are joined by a disulfide. 2 residues coordinate Zn(2+): His-180 and Glu-183. Substrate contacts are provided by residues 180–183 (HARE) and Arg-238. Asn-240 is a glycosylation site (N-linked (GlcNAc...) asparagine). Intrachain disulfides connect Cys-249–Cys-273 and Cys-264–Cys-278. 255-256 (NR) is a substrate binding site. His-309 serves as a coordination point for Zn(2+). 310–311 (SY) serves as a coordination point for substrate. Asn-322 carries an N-linked (GlcNAc...) asparagine glycan. Tyr-362 lines the substrate pocket. Glu-384 serves as the catalytic Proton donor/acceptor.

It belongs to the peptidase M14 family. Zn(2+) is required as a cofactor. As to expression, plasma; synthesized in the liver.

It localises to the secreted. It carries out the reaction Release of C-terminal Arg and Lys from a polypeptide.. TAFI/CPB2 is unique among carboxypeptidases in that it spontaneously inactivates with a short half-life, a property that is crucial for its role in controlling blood clot lysis. The zymogen is stabilized by interactions with the activation peptide. Release of the activation peptide increases a dynamic flap mobility and in time this leads to conformational changes that disrupt the catalytic site and expose a cryptic thrombin-cleavage site present at Arg-323. Cleaves C-terminal arginine or lysine residues from biologically active peptides such as kinins or anaphylatoxins in the circulation thereby regulating their activities. Down-regulates fibrinolysis by removing C-terminal lysine residues from fibrin that has already been partially degraded by plasmin. The sequence is that of Carboxypeptidase B2 (Cpb2) from Rattus norvegicus (Rat).